A 261-amino-acid polypeptide reads, in one-letter code: Small ribosomal subunit protein uS2 (261 aa).

This sequence belongs to the universal ribosomal protein uS2 family.

This Paracoccus denitrificans (strain Pd 1222) protein is Small ribosomal subunit protein uS2.